The chain runs to 400 residues: S-adenosylmethionine synthase (400 aa).

Histidine 17 is an ATP binding site. A Mg(2+)-binding site is contributed by aspartate 19. Glutamate 45 provides a ligand contact to K(+). L-methionine is bound by residues glutamate 58 and glutamine 101. Residues 101–111 are flexible loop; that stretch reads QSPDIAMGVDQ. Residues 177–179, 244–245, aspartate 253, 259–260, alanine 276, and lysine 280 contribute to the ATP site; these read DGK, RF, and RK. Aspartate 253 contributes to the L-methionine binding site. Lysine 284 contributes to the L-methionine binding site.

This sequence belongs to the AdoMet synthase family. As to quaternary structure, homotetramer; dimer of dimers. Requires Mg(2+) as cofactor. K(+) is required as a cofactor.

It is found in the cytoplasm. It catalyses the reaction L-methionine + ATP + H2O = S-adenosyl-L-methionine + phosphate + diphosphate. It participates in amino-acid biosynthesis; S-adenosyl-L-methionine biosynthesis; S-adenosyl-L-methionine from L-methionine: step 1/1. Catalyzes the formation of S-adenosylmethionine (AdoMet) from methionine and ATP. The overall synthetic reaction is composed of two sequential steps, AdoMet formation and the subsequent tripolyphosphate hydrolysis which occurs prior to release of AdoMet from the enzyme. The protein is S-adenosylmethionine synthase of Bacillus licheniformis (strain ATCC 14580 / DSM 13 / JCM 2505 / CCUG 7422 / NBRC 12200 / NCIMB 9375 / NCTC 10341 / NRRL NRS-1264 / Gibson 46).